The chain runs to 36 residues: GVQISQISSFPTTADVSYDFNITNALGGIQPVGSLK.

This sequence belongs to the glycosyl hydrolase 12 (cellulase H) family.

It localises to the secreted. Its subcellular location is the extracellular space. The enzyme catalyses Endohydrolysis of (1-&gt;4)-beta-D-glucosidic linkages in cellulose, lichenin and cereal beta-D-glucans.. In terms of biological role, has carboxymethylcellulase activity. In Gloeophyllum trabeum (Brown rot fungus), this protein is Endoglucanase Cel12A.